We begin with the raw amino-acid sequence, 28 residues long: Turritoxin F21-2 (28 aa).

Expressed by the venom duct.

It localises to the secreted. In terms of biological role, potent inhibitor of human alpha-3-beta-2 nAChRs (IC(50)=566.2 nM). Irreversibly inhibits the acetylcholine-induced response on human alpha-7/CHRNA7 (55% inhibition at 5.6 uM) and alpha-3-beta-2/CHRNA3-CHRNB2 (91% inhibition) nAChRs. The polypeptide is Turritoxin F21-2 (Polystira nobilis (Sea snail)).